The following is a 226-amino-acid chain: UPF0173 metal-dependent hydrolase Tpet_1587 (226 aa).

Belongs to the UPF0173 family.

The sequence is that of UPF0173 metal-dependent hydrolase Tpet_1587 from Thermotoga petrophila (strain ATCC BAA-488 / DSM 13995 / JCM 10881 / RKU-1).